A 131-amino-acid polypeptide reads, in one-letter code: Cytochrome c-552 (131 aa).

Positions 11, 14, 15, and 69 each coordinate heme c.

In terms of processing, binds 1 heme c group covalently per subunit.

Functionally, this monoheme basic protein appears to function as an electron donor to cytochrome oxidase in T.thermophilus. This chain is Cytochrome c-552 (cycA), found in Thermus thermophilus.